We begin with the raw amino-acid sequence, 185 residues long: Elongation factor P (185 aa).

It belongs to the elongation factor P family.

It is found in the cytoplasm. It participates in protein biosynthesis; polypeptide chain elongation. Functionally, involved in peptide bond synthesis. Stimulates efficient translation and peptide-bond synthesis on native or reconstituted 70S ribosomes in vitro. Probably functions indirectly by altering the affinity of the ribosome for aminoacyl-tRNA, thus increasing their reactivity as acceptors for peptidyl transferase. This chain is Elongation factor P, found in Thermoanaerobacter sp. (strain X514).